The sequence spans 756 residues: Putative DNA ligase 052L (756 aa).

Lys-103 functions as the N6-AMP-lysine intermediate in the catalytic mechanism. A compositionally biased stretch (low complexity) spans 610 to 620 (PSAAGSASPCR). A disordered region spans residues 610-630 (PSAAGSASPCRPTKRRDDWFD). Residues 648-742 (KKRPPMQGYV…LKRQRKCRAR (95 aa)) enclose the BRCT domain.

This sequence belongs to the NAD-dependent DNA ligase family.

The enzyme catalyses NAD(+) + (deoxyribonucleotide)n-3'-hydroxyl + 5'-phospho-(deoxyribonucleotide)m = (deoxyribonucleotide)n+m + AMP + beta-nicotinamide D-nucleotide.. In terms of biological role, catalyzes the formation of phosphodiester linkages between 5'-phosphoryl and 3'-hydroxyl groups in double-stranded DNA using NAD as a coenzyme and as the energy source for the reaction. The protein is Putative DNA ligase 052L of Invertebrate iridescent virus 3 (IIV-3).